Reading from the N-terminus, the 72-residue chain is Small ribosomal subunit protein bS20 (72 aa).

It belongs to the bacterial ribosomal protein bS20 family.

Binds directly to 16S ribosomal RNA. This Aeromonas salmonicida protein is Small ribosomal subunit protein bS20 (rpsT).